The sequence spans 409 residues: Astacin-like metalloendopeptidase (409 aa).

An N-terminal signal peptide occupies residues 1-19 (MDLKMLLIFTAFLLPAVLG). Residues 20–86 (FPIQDNYENS…EGDIVPRRSR (67 aa)) constitute a propeptide that is removed on maturation. Residues 30–42 (TATSESTQVTTEE) show a composition bias toward low complexity. The disordered stretch occupies residues 30 to 55 (TATSESTQVTTEESIYDSPSPTETDS). The Peptidase M12A domain maps to 87–285 (SAFNCRNCYW…AKINKLYNCS (199 aa)). 5 disulfides stabilise this stretch: Cys91-Cys94, Cys134-Cys284, Cys155-Cys175, Cys287-Cys313, and Cys339-Cys362. His183 is a Zn(2+) binding site. The active site involves Glu184. Residues His187 and His193 each coordinate Zn(2+). The CUB domain maps to 287–399 (CSTIIDAAFG…SGFQATFTSA (113 aa)).

It depends on Zn(2+) as a cofactor.

Its subcellular location is the cytoplasm. It is found in the cell membrane. It localises to the cytoplasmic vesicle. The protein resides in the secretory vesicle. The protein localises to the cortical granule. Functionally, probable oocyte-specific oolemmal receptor involved in sperm and egg adhesion and fertilization. Protease which may play a role in the breaking down of the vitelline membrane (days 0-5) and possibly, in the digestion of the egg white (days 9-12). The chain is Astacin-like metalloendopeptidase from Coturnix japonica (Japanese quail).